Reading from the N-terminus, the 460-residue chain is MTLNGNIMKYCLEKGEILISFLLIALESMFRICTVILPSPLRNWFYEQSKKVYSYFLPELLVDDNANKLTDARDTIDLCALHGYDLEEHFVRTTDGYLLGLHRVYKKKKGKIEELNYLPPVLFIHGLMMNSESWVCNLKKEDAIPFALVEQGYDVWLGNLRGNKYSIKNIKFSSQNPKFWDFSLDSIAIFDIPSIVKYILSVNSFDSISLVGFSQGAILAFAALSIDTELRNSVRAFIALAPAIAPKKYSGRTVKSIIHANSQLLYLMFGRNSMLGSAVFWQAVLYPPVFAKIVDLFLRFFLSWTGKNISETQKIVAYSHLYSFTSVKCFVHWAQITRRKVLQMYDDSPGFKPSYYTNLNRIARYPIENIRLPITLVYGSNDNMVDIETLKTQLPPLSQCIQIPNYEHLDIIMGDTKKDIVIQQVVEQLNHVIAGDYFESIKEEFGLDTELVDGVMNHTI.

Topologically, residues 1–16 are cytoplasmic; it reads MTLNGNIMKYCLEKGE. A helical; Signal-anchor for type II membrane protein membrane pass occupies residues 17–37; the sequence is ILISFLLIALESMFRICTVIL. Residues 38–460 lie on the Lumenal side of the membrane; the sequence is PSPLRNWFYE…LVDGVMNHTI (423 aa). Catalysis depends on Ser-214, which acts as the Nucleophile. The N-linked (GlcNAc...) asparagine glycan is linked to Asn-308. Catalysis depends on charge relay system residues Asp-382 and His-408. Residue Asn-457 is glycosylated (N-linked (GlcNAc...) asparagine).

The protein belongs to the AB hydrolase superfamily. Lipase family.

Its subcellular location is the golgi apparatus. The protein resides in the membrane. Probable lipase. The protein is Probable lipase C14C8.15 of Schizosaccharomyces pombe (strain 972 / ATCC 24843) (Fission yeast).